Here is a 624-residue protein sequence, read N- to C-terminus: Methyl-accepting chemotaxis protein McpG (624 aa).

Residues 11-31 (ILLAASLIVILAFSLFTLYND) traverse the membrane as a helical segment. Residues 36–254 (NAIREDLENY…GLPSANWYIG (219 aa)) form the Cache domain. A helical membrane pass occupies residues 272–292 (SAVIATVVAVVIIIGLLGLLI). Positions 293–347 (RVLMQPLHTMTRAMEDIAEGEGDLTKRLHIHSHDEFGVLGNAFNRFVERIHSSIR) constitute an HAMP domain. Residues 352–588 (ATEQVNEVAL…AINMDINEIN (237 aa)) form the Methyl-accepting transducer domain.

It belongs to the methyl-accepting chemotaxis (MCP) protein family.

It localises to the cell membrane. Functionally, chemotactic-signal transducers respond to changes in the concentration of attractants and repellents in the environment, transduce a signal from the outside to the inside of the cell, and facilitate sensory adaptation through the variation of the level of methylation. McpG is a specific gamma-aminobutyric acid (GABA) chemoreceptor that recognizes GABA over a wide range of environmental conditions. Contributes to attraction to and colonization of plant roots. This Pseudomonas putida (strain ATCC 47054 / DSM 6125 / CFBP 8728 / NCIMB 11950 / KT2440) protein is Methyl-accepting chemotaxis protein McpG.